A 325-amino-acid chain; its full sequence is Urease accessory protein UreD (325 aa).

The protein belongs to the UreD family. In terms of assembly, ureD, UreF and UreG form a complex that acts as a GTP-hydrolysis-dependent molecular chaperone, activating the urease apoprotein by helping to assemble the nickel containing metallocenter of UreC. The UreE protein probably delivers the nickel.

It localises to the cytoplasm. In terms of biological role, required for maturation of urease via the functional incorporation of the urease nickel metallocenter. Functionally, expression of the urease operon increases the likelihood of bacterial survival by contributing to acid resistance in vitro and in vivo in BALB/c mice. Y.enterocolitica enters the body via an oral path and must survive the acidic stomach before being able to colonize the intestinal mucosa. The sequence is that of Urease accessory protein UreD from Yersinia enterocolitica.